We begin with the raw amino-acid sequence, 550 residues long: Glucose-6-phosphate isomerase (550 aa).

Glu356 functions as the Proton donor in the catalytic mechanism. Residues His387 and Lys515 contribute to the active site.

Belongs to the GPI family.

It is found in the cytoplasm. It carries out the reaction alpha-D-glucose 6-phosphate = beta-D-fructose 6-phosphate. It participates in carbohydrate biosynthesis; gluconeogenesis. It functions in the pathway carbohydrate degradation; glycolysis; D-glyceraldehyde 3-phosphate and glycerone phosphate from D-glucose: step 2/4. In terms of biological role, catalyzes the reversible isomerization of glucose-6-phosphate to fructose-6-phosphate. This chain is Glucose-6-phosphate isomerase, found in Vibrio campbellii (strain ATCC BAA-1116).